A 348-amino-acid polypeptide reads, in one-letter code: Elongation factor Ts (348 aa).

The involved in Mg(2+) ion dislocation from EF-Tu stretch occupies residues 82 to 85 (TDFV).

This sequence belongs to the EF-Ts family.

Its subcellular location is the cytoplasm. Functionally, associates with the EF-Tu.GDP complex and induces the exchange of GDP to GTP. It remains bound to the aminoacyl-tRNA.EF-Tu.GTP complex up to the GTP hydrolysis stage on the ribosome. This Aliarcobacter butzleri (strain RM4018) (Arcobacter butzleri) protein is Elongation factor Ts.